The sequence spans 145 residues: Transcriptional anti-antiactivator ExsC (145 aa).

In terms of assembly, homodimer. Interacts with ExsE. Interacts directly with ExsD to form a heterotetrameric complex.

Its subcellular location is the cytoplasm. Its activity is regulated as follows. In the absence of inducing signals, ExsE interacts with and inhibits ExsC activity. Its function is as follows. Part of the regulatory cascade that plays a role in the transcriptional regulation of the type III secretion system (T3SS). Interacts with antiactivator ExsD to inhibit its activity leading to ExsA-mediated transcription. This Pseudomonas aeruginosa (strain ATCC 15692 / DSM 22644 / CIP 104116 / JCM 14847 / LMG 12228 / 1C / PRS 101 / PAO1) protein is Transcriptional anti-antiactivator ExsC (exsC).